Reading from the N-terminus, the 351-residue chain is Alcohol dehydrogenase 2 (351 aa).

Residues cysteine 47, histidine 70, cysteine 101, cysteine 104, cysteine 107, cysteine 115, and cysteine 157 each coordinate Zn(2+). Residues 181 to 187 (GAGGGLG), aspartate 205, lysine 210, 272 to 274 (VGL), and arginine 344 contribute to the NAD(+) site.

This sequence belongs to the zinc-containing alcohol dehydrogenase family. As to quaternary structure, homotetramer. Requires Zn(2+) as cofactor.

The enzyme catalyses a secondary alcohol + NAD(+) = a ketone + NADH + H(+). Its function is as follows. Versatile oxidoreductase that catalyzes the oxidation and reduction of a broad range of substrates. Preferentially oxidizes secondary alcohols. Has highest activity for racemic 2-octanol. Is also an efficient reductase for selected substrates. Substrate selectivity was found for medium chain lipophilic ketones. Has highest activities for 2-octanone, 2-nonanone and 2-decanone. The enzyme is (S)-selective in the reduction direction and produces exclusively the (S)-enantiomer. This Yarrowia lipolytica (strain CLIB 122 / E 150) (Yeast) protein is Alcohol dehydrogenase 2 (ADH2).